We begin with the raw amino-acid sequence, 561 residues long: Small ribosomal subunit protein bS1 (561 aa).

S1 motif domains lie at 22–88 (GEVI…LSRE), 106–172 (GDIL…VSRR), 193–261 (GSVI…LGMK), 278–348 (GTRL…LGMK), 365–435 (GDKI…LGIK), and 452–521 (GSLV…LSVK).

This sequence belongs to the bacterial ribosomal protein bS1 family.

Its function is as follows. Binds mRNA; thus facilitating recognition of the initiation point. It is needed to translate mRNA with a short Shine-Dalgarno (SD) purine-rich sequence. This Neisseria meningitidis serogroup B (strain ATCC BAA-335 / MC58) protein is Small ribosomal subunit protein bS1 (rpsA).